The following is a 119-amino-acid chain: Phosphoribosyl-AMP cyclohydrolase (119 aa).

Asp-72 contacts Mg(2+). Residue Cys-73 participates in Zn(2+) binding. Mg(2+) is bound by residues Asp-74 and Asp-76. Zn(2+) contacts are provided by Cys-89 and Cys-96.

Belongs to the PRA-CH family. Homodimer. It depends on Mg(2+) as a cofactor. Zn(2+) serves as cofactor.

Its subcellular location is the cytoplasm. It catalyses the reaction 1-(5-phospho-beta-D-ribosyl)-5'-AMP + H2O = 1-(5-phospho-beta-D-ribosyl)-5-[(5-phospho-beta-D-ribosylamino)methylideneamino]imidazole-4-carboxamide. It functions in the pathway amino-acid biosynthesis; L-histidine biosynthesis; L-histidine from 5-phospho-alpha-D-ribose 1-diphosphate: step 3/9. In terms of biological role, catalyzes the hydrolysis of the adenine ring of phosphoribosyl-AMP. The protein is Phosphoribosyl-AMP cyclohydrolase of Methanocella arvoryzae (strain DSM 22066 / NBRC 105507 / MRE50).